The following is a 157-amino-acid chain: 2-C-methyl-D-erythritol 2,4-cyclodiphosphate synthase (157 aa).

A divalent metal cation contacts are provided by D8 and H10. 4-CDP-2-C-methyl-D-erythritol 2-phosphate is bound by residues D8–H10 and H34–S35. H42 is a binding site for a divalent metal cation. Residues D56–G58, F61–E65, T132–E135, F139, and R142 each bind 4-CDP-2-C-methyl-D-erythritol 2-phosphate.

It belongs to the IspF family. As to quaternary structure, homotrimer. A divalent metal cation is required as a cofactor.

It carries out the reaction 4-CDP-2-C-methyl-D-erythritol 2-phosphate = 2-C-methyl-D-erythritol 2,4-cyclic diphosphate + CMP. It participates in isoprenoid biosynthesis; isopentenyl diphosphate biosynthesis via DXP pathway; isopentenyl diphosphate from 1-deoxy-D-xylulose 5-phosphate: step 4/6. Its function is as follows. Involved in the biosynthesis of isopentenyl diphosphate (IPP) and dimethylallyl diphosphate (DMAPP), two major building blocks of isoprenoid compounds. Catalyzes the conversion of 4-diphosphocytidyl-2-C-methyl-D-erythritol 2-phosphate (CDP-ME2P) to 2-C-methyl-D-erythritol 2,4-cyclodiphosphate (ME-CPP) with a corresponding release of cytidine 5-monophosphate (CMP). This Desulforamulus reducens (strain ATCC BAA-1160 / DSM 100696 / MI-1) (Desulfotomaculum reducens) protein is 2-C-methyl-D-erythritol 2,4-cyclodiphosphate synthase.